A 347-amino-acid chain; its full sequence is P2Y purinoceptor 12 (347 aa).

Over 1 to 33 (MDVPGVNTTSANTTFSPGTSTLCVRDYKITQVL) the chain is Extracellular. N-linked (GlcNAc...) asparagine glycosylation is found at Asn7 and Asn12. Intrachain disulfides connect Cys23-Cys276 and Cys103-Cys181. Residues 34–56 (FPLLYTVLFFAGLITNSLAMRIF) form a helical membrane-spanning segment. The Cytoplasmic portion of the chain corresponds to 57–67 (FQIRSKSNFII). Phosphoserine occurs at positions 61 and 63. Residues 68 to 88 (FLKNTVISDLLMILTFPFKIL) form a helical membrane-spanning segment. Over 89 to 103 (SDAKLGAGPLRTLVC) the chain is Extracellular. Arg99, Cys103, and Tyr111 together coordinate ADP. The chain crosses the membrane as a helical span at residues 104 to 124 (QVTSVTFYFTMYISISFLGLI). Residues 125–148 (TIDRYLKTTRPFKTSSPSNLLGAK) lie on the Cytoplasmic side of the membrane. The helical transmembrane segment at 149-168 (ILSVVIWAFMFLISLPNMIL) threads the bilayer. ADP is bound by residues 162 to 165 (SLPN), 181 to 185 (CSFLK), His193, and Asn197. Topologically, residues 169 to 191 (TNRRPKDKDVTKCSFLKSEFGLV) are extracellular. The helical transmembrane segment at 192 to 213 (WHEIVNYICQVIFWINFLIVIV) threads the bilayer. At 214–239 (CYSLITKELYRSYVRTRGSAKVPKKK) the chain is on the cytoplasmic side. A helical transmembrane segment spans residues 240–265 (VNVKVFIIIAVFFICFVPFHFARIPY). ADP contacts are provided by residues 262–265 (RIPY), Gln269, and Lys286. Topologically, residues 266 to 284 (TLSQTRAVFDCSAENTLFY) are extracellular. A helical membrane pass occupies residues 285 to 304 (VKESTLWLTSLNACLDPFIY). At 305–347 (FFLCKSFRNSLTSMLRCSNSTSTSGTNKKKGQEGGEPSEETPM) the chain is on the cytoplasmic side. The interval 321–347 (CSNSTSTSGTNKKKGQEGGEPSEETPM) is disordered.

Belongs to the G-protein coupled receptor 1 family.

The protein localises to the cell membrane. Receptor for ADP and ATP coupled to G-proteins that inhibit the adenylyl cyclase second messenger system. Required for normal platelet aggregation and blood coagulation. This is P2Y purinoceptor 12 (P2ry12) from Mus musculus (Mouse).